The sequence spans 175 residues: ATP synthase subunit delta (175 aa).

This sequence belongs to the ATPase delta chain family. F-type ATPases have 2 components, F(1) - the catalytic core - and F(0) - the membrane proton channel. F(1) has five subunits: alpha(3), beta(3), gamma(1), delta(1), epsilon(1). F(0) has three main subunits: a(1), b(2) and c(10-14). The alpha and beta chains form an alternating ring which encloses part of the gamma chain. F(1) is attached to F(0) by a central stalk formed by the gamma and epsilon chains, while a peripheral stalk is formed by the delta and b chains.

It is found in the cell membrane. Its function is as follows. F(1)F(0) ATP synthase produces ATP from ADP in the presence of a proton or sodium gradient. F-type ATPases consist of two structural domains, F(1) containing the extramembraneous catalytic core and F(0) containing the membrane proton channel, linked together by a central stalk and a peripheral stalk. During catalysis, ATP synthesis in the catalytic domain of F(1) is coupled via a rotary mechanism of the central stalk subunits to proton translocation. Functionally, this protein is part of the stalk that links CF(0) to CF(1). It either transmits conformational changes from CF(0) to CF(1) or is implicated in proton conduction. This Ruminiclostridium cellulolyticum (strain ATCC 35319 / DSM 5812 / JCM 6584 / H10) (Clostridium cellulolyticum) protein is ATP synthase subunit delta.